We begin with the raw amino-acid sequence, 146 residues long: Putative calcium-binding protein CML19 (146 aa).

EF-hand domains lie at 3-38 (AATA…ALGE), 40-75 (MSAE…LEMG), 79-114 (ERCR…LGSH), and 115-146 (QGIE…MMDA). Ca(2+)-binding residues include aspartate 16, aspartate 18, aspartate 20, lysine 22, glutamate 27, aspartate 53, aspartate 55, aspartate 57, and glutamate 64. Residues aspartate 128, aspartate 130, aspartate 132, and glutamate 139 each contribute to the Ca(2+) site.

Functionally, potential calcium sensor. The sequence is that of Putative calcium-binding protein CML19 (CML19) from Oryza sativa subsp. japonica (Rice).